The primary structure comprises 249 residues: Demethylmenaquinone methyltransferase (249 aa).

S-adenosyl-L-methionine contacts are provided by residues T67, D87, and 115 to 116; that span reads DA.

This sequence belongs to the class I-like SAM-binding methyltransferase superfamily. MenG/UbiE family.

The catalysed reaction is a 2-demethylmenaquinol + S-adenosyl-L-methionine = a menaquinol + S-adenosyl-L-homocysteine + H(+). It participates in quinol/quinone metabolism; menaquinone biosynthesis; menaquinol from 1,4-dihydroxy-2-naphthoate: step 2/2. Functionally, methyltransferase required for the conversion of demethylmenaquinol (DMKH2) to menaquinol (MKH2). In Leptospira interrogans serogroup Icterohaemorrhagiae serovar copenhageni (strain Fiocruz L1-130), this protein is Demethylmenaquinone methyltransferase.